We begin with the raw amino-acid sequence, 190 residues long: NADH-quinone oxidoreductase subunit C (190 aa).

The protein belongs to the complex I 30 kDa subunit family. In terms of assembly, NDH-1 is composed of 14 different subunits. Subunits NuoB, C, D, E, F, and G constitute the peripheral sector of the complex.

Its subcellular location is the cell membrane. The catalysed reaction is a quinone + NADH + 5 H(+)(in) = a quinol + NAD(+) + 4 H(+)(out). Functionally, NDH-1 shuttles electrons from NADH, via FMN and iron-sulfur (Fe-S) centers, to quinones in the respiratory chain. The immediate electron acceptor for the enzyme in this species is believed to be ubiquinone. Couples the redox reaction to proton translocation (for every two electrons transferred, four hydrogen ions are translocated across the cytoplasmic membrane), and thus conserves the redox energy in a proton gradient. The polypeptide is NADH-quinone oxidoreductase subunit C (Wolbachia sp. subsp. Brugia malayi (strain TRS)).